Consider the following 186-residue polypeptide: Elongation factor P (186 aa).

It belongs to the elongation factor P family.

The protein localises to the cytoplasm. It functions in the pathway protein biosynthesis; polypeptide chain elongation. Involved in peptide bond synthesis. Stimulates efficient translation and peptide-bond synthesis on native or reconstituted 70S ribosomes in vitro. Probably functions indirectly by altering the affinity of the ribosome for aminoacyl-tRNA, thus increasing their reactivity as acceptors for peptidyl transferase. The sequence is that of Elongation factor P from Streptococcus agalactiae serotype Ia (strain ATCC 27591 / A909 / CDC SS700).